The sequence spans 443 residues: Frizzled/smoothened-like sans CRD protein E (443 aa).

The N-terminal stretch at 1-23 (MISHIKKFINLYTIVFLLYILYS) is a signal peptide. The Extracellular portion of the chain corresponds to 24–83 (NENFFVKGQKLPPGFCPSPLIYRNTTDRQSDIDIGFQFLGETNCVQPCPSLILTENEWNK). A glycan (N-linked (GlcNAc...) asparagine) is linked at N47. Residues 84–104 (VFNMSLVAGTISMFALIFLII) traverse the membrane as a helical segment. Topologically, residues 105–120 (TYSPLVNNIKDYTRHT) are cytoplasmic. Residues 121–141 (VGILFLFSGILIAMTTDGRQL) form a helical membrane-spanning segment. At 142–166 (WDIDLGFKKYCPEPGRFARQSDSKC) the chain is on the extracellular side. The helical transmembrane segment at 167–187 (LVTAIFFQFGCVTALLWWAAI) threads the bilayer. Topologically, residues 188-203 (SVDLWITIKKIKISKK) are cytoplasmic. A helical membrane pass occupies residues 204–224 (LFIIYTIAVNIVTIVLTFGPV). Over 225–248 (GSKQYGYIDAAIGCWLMDLKYQVG) the chain is Extracellular. A helical transmembrane segment spans residues 249-269 (YFWAPVGFCLCVGCVSIVLIL). The Cytoplasmic portion of the chain corresponds to 270–289 (KEIYNVSDAVKKKLLAKHLK). The helical transmembrane segment at 290-310 (PLMLIILMLTEFIYMFIFYSY) threads the bilayer. Residues 311–350 (TTSKKNHYHDIIEEYVVCLFVHAANPSVCKIGSTISPSAH) lie on the Extracellular side of the membrane. The chain crosses the membrane as a helical span at residues 351 to 371 (FFFHLCIRLMGLEVLIFYGFT). Residues 372-443 (RQTRKIWMRS…SGIDDSKHDP (72 aa)) are Cytoplasmic-facing. Low complexity-rich tracts occupy residues 397–410 (SSSNDSKSSNNKTS) and 419–432 (ESSEQSNEPEQSIE). Positions 397 to 443 (SSSNDSKSSNNKTSGRVTGGFGESSEQSNEPEQSIELSGIDDSKHDP) are disordered.

Belongs to the G-protein coupled receptor Fz/Smo family.

It localises to the membrane. This Dictyostelium discoideum (Social amoeba) protein is Frizzled/smoothened-like sans CRD protein E (fscE).